The following is a 304-amino-acid chain: Acetylglutamate kinase (304 aa).

Substrate is bound by residues 82-83 (GG), arginine 104, and asparagine 197.

This sequence belongs to the acetylglutamate kinase family. ArgB subfamily.

It is found in the cytoplasm. The enzyme catalyses N-acetyl-L-glutamate + ATP = N-acetyl-L-glutamyl 5-phosphate + ADP. The protein operates within amino-acid biosynthesis; L-arginine biosynthesis; N(2)-acetyl-L-ornithine from L-glutamate: step 2/4. Its function is as follows. Catalyzes the ATP-dependent phosphorylation of N-acetyl-L-glutamate. This is Acetylglutamate kinase from Prochlorococcus marinus (strain NATL1A).